Reading from the N-terminus, the 111-residue chain is BET1-like protein (111 aa).

The Cytoplasmic segment spans residues 1 to 86 (MADWARAQSP…MARSGRDNRK (86 aa)). 2 positions are modified to phosphoserine: Ser9 and Ser37. Residues 15–77 (EILDRENKRM…TGSVKRFSTM (63 aa)) form the t-SNARE coiled-coil homology domain. The helical; Anchor for type IV membrane protein transmembrane segment at 87–107 (LLCGMAVGLIVAFFILSYFLS) threads the bilayer. Topologically, residues 108–111 (RART) are lumenal.

In terms of assembly, component of a SNARE complex consisting of STX5, YKT6, GOSR1 and BET1L. Interacts with STX5.

It localises to the golgi apparatus membrane. It is found in the golgi apparatus. The protein resides in the trans-Golgi network membrane. In terms of biological role, vesicle SNARE required for targeting and fusion of retrograde transport vesicles with the Golgi complex. Required for the integrity of the Golgi complex. The protein is BET1-like protein of Pongo abelii (Sumatran orangutan).